A 347-amino-acid polypeptide reads, in one-letter code: Phenylalanine--tRNA ligase alpha subunit (347 aa).

Mg(2+) is bound at residue Glu-261.

This sequence belongs to the class-II aminoacyl-tRNA synthetase family. Phe-tRNA synthetase alpha subunit type 1 subfamily. As to quaternary structure, tetramer of two alpha and two beta subunits. Requires Mg(2+) as cofactor.

Its subcellular location is the cytoplasm. It catalyses the reaction tRNA(Phe) + L-phenylalanine + ATP = L-phenylalanyl-tRNA(Phe) + AMP + diphosphate + H(+). This Streptococcus mutans serotype c (strain ATCC 700610 / UA159) protein is Phenylalanine--tRNA ligase alpha subunit.